The sequence spans 285 residues: Inositol oxygenase (285 aa).

Arg-29 serves as a coordination point for substrate. Ser-33 carries the post-translational modification Phosphoserine. 85–87 is a binding site for substrate; it reads DES. Fe cation contacts are provided by His-98, His-123, and Asp-124. Residues Lys-127 and 141 to 142 each bind substrate; that span reads GD. Fe cation is bound by residues His-194, His-220, and Asp-253. Position 220 to 221 (220 to 221) interacts with substrate; the sequence is HS.

The protein belongs to the myo-inositol oxygenase family. Requires Fe cation as cofactor. As to expression, kidney specific.

The protein localises to the cytoplasm. The enzyme catalyses myo-inositol + O2 = D-glucuronate + H2O + H(+). It participates in polyol metabolism; myo-inositol degradation into D-glucuronate; D-glucuronate from myo-inositol: step 1/1. The chain is Inositol oxygenase (Miox) from Rattus norvegicus (Rat).